The sequence spans 235 residues: Proteasome subunit beta type-1 (235 aa).

Positions 1 to 20 (MSRLGFEQFPDYQVPGMKHP) are excised as a propeptide.

Belongs to the peptidase T1B family. In terms of assembly, the 26S proteasome consists of a 20S proteasome core and two 19S regulatory subunits. The 20S proteasome core is composed of 28 subunits that are arranged in four stacked rings, resulting in a barrel-shaped structure. The two end rings are each formed by seven alpha subunits, and the two central rings are each formed by seven beta subunits. The catalytic chamber with the active sites is on the inside of the barrel.

It is found in the cytoplasm. Its subcellular location is the nucleus. Its function is as follows. Non-catalytic component of the proteasome, a multicatalytic proteinase complex which is characterized by its ability to cleave peptides with Arg, Phe, Tyr, Leu, and Glu adjacent to the leaving group at neutral or slightly basic pH. The proteasome has an ATP-dependent proteolytic activity. This Drosophila melanogaster (Fruit fly) protein is Proteasome subunit beta type-1 (Prosbeta6).